A 194-amino-acid polypeptide reads, in one-letter code: Protein GrpE (194 aa).

Residues 1-44 (MAEEKQNEELNEQEELNETEAETAEAEQTAAEADAPAEETQTEM) form a disordered region. Over residues 9 to 25 (ELNEQEELNETEAETAE) the composition is skewed to acidic residues.

It belongs to the GrpE family. In terms of assembly, homodimer.

Its subcellular location is the cytoplasm. Participates actively in the response to hyperosmotic and heat shock by preventing the aggregation of stress-denatured proteins, in association with DnaK and GrpE. It is the nucleotide exchange factor for DnaK and may function as a thermosensor. Unfolded proteins bind initially to DnaJ; upon interaction with the DnaJ-bound protein, DnaK hydrolyzes its bound ATP, resulting in the formation of a stable complex. GrpE releases ADP from DnaK; ATP binding to DnaK triggers the release of the substrate protein, thus completing the reaction cycle. Several rounds of ATP-dependent interactions between DnaJ, DnaK and GrpE are required for fully efficient folding. In Bacillus licheniformis (strain ATCC 14580 / DSM 13 / JCM 2505 / CCUG 7422 / NBRC 12200 / NCIMB 9375 / NCTC 10341 / NRRL NRS-1264 / Gibson 46), this protein is Protein GrpE.